Here is a 164-residue protein sequence, read N- to C-terminus: ATP synthase B' chain, cyanelle (164 aa).

The helical transmembrane segment at 26–46 (ATLPVMMVQLLVLMLILNAVF) threads the bilayer.

This sequence belongs to the ATPase B chain family. In terms of assembly, F-type ATPases have 2 components, F(1) - the catalytic core - and F(0) - the membrane proton channel. F(1) has five subunits: alpha(3), beta(3), gamma(1), delta(1), epsilon(1). F(0) has four main subunits: a(1), b(1), b'(1) and c(10-14). The alpha and beta chains form an alternating ring which encloses part of the gamma chain. F(1) is attached to F(0) by a central stalk formed by the gamma and epsilon chains, while a peripheral stalk is formed by the delta, b and b' chains.

It is found in the plastid. It localises to the cyanelle thylakoid membrane. F(1)F(0) ATP synthase produces ATP from ADP in the presence of a proton or sodium gradient. F-type ATPases consist of two structural domains, F(1) containing the extramembraneous catalytic core and F(0) containing the membrane proton channel, linked together by a central stalk and a peripheral stalk. During catalysis, ATP synthesis in the catalytic domain of F(1) is coupled via a rotary mechanism of the central stalk subunits to proton translocation. Functionally, component of the F(0) channel, it forms part of the peripheral stalk, linking F(1) to F(0). The b'-subunit is a diverged and duplicated form of b found in plants and photosynthetic bacteria. The sequence is that of ATP synthase B' chain, cyanelle from Cyanophora paradoxa.